The sequence spans 468 residues: Argininosuccinate lyase (468 aa).

The protein belongs to the lyase 1 family. Argininosuccinate lyase subfamily.

Its subcellular location is the cytoplasm. It carries out the reaction 2-(N(omega)-L-arginino)succinate = fumarate + L-arginine. Its pathway is amino-acid biosynthesis; L-arginine biosynthesis; L-arginine from L-ornithine and carbamoyl phosphate: step 3/3. This Paraburkholderia phymatum (strain DSM 17167 / CIP 108236 / LMG 21445 / STM815) (Burkholderia phymatum) protein is Argininosuccinate lyase.